A 745-amino-acid chain; its full sequence is 5-methyltetrahydropteroyltriglutamate--homocysteine methyltransferase (745 aa).

5-methyltetrahydropteroyltri-L-glutamate-binding positions include 19–22 (RELK) and Lys-119. Residues 418–420 (IGS) and Glu-471 each bind L-homocysteine. L-methionine is bound by residues 418–420 (IGS) and Glu-471. 5-methyltetrahydropteroyltri-L-glutamate is bound by residues 502–503 (RC) and Trp-548. Asp-586 provides a ligand contact to L-homocysteine. Asp-586 provides a ligand contact to L-methionine. A 5-methyltetrahydropteroyltri-L-glutamate-binding site is contributed by Glu-592. His-628, Cys-630, and Glu-652 together coordinate Zn(2+). His-681 serves as the catalytic Proton donor. Zn(2+) is bound at residue Cys-713.

It belongs to the vitamin-B12 independent methionine synthase family. Zn(2+) serves as cofactor.

The enzyme catalyses 5-methyltetrahydropteroyltri-L-glutamate + L-homocysteine = tetrahydropteroyltri-L-glutamate + L-methionine. It participates in amino-acid biosynthesis; L-methionine biosynthesis via de novo pathway; L-methionine from L-homocysteine (MetE route): step 1/1. In terms of biological role, catalyzes the transfer of a methyl group from 5-methyltetrahydrofolate to homocysteine resulting in methionine formation. The chain is 5-methyltetrahydropteroyltriglutamate--homocysteine methyltransferase from Corynebacterium glutamicum (strain R).